A 289-amino-acid chain; its full sequence is uncharacterized protein (289 aa).

Residues 25-66 form a disordered region; it reads GGSGDSQSAHTPSTSIHTQNNSTPNKNTSTPPVNVSNANNLE. A compositionally biased stretch (polar residues) spans 33–43; sequence AHTPSTSIHTQ. Residues 44–59 show a composition bias toward low complexity; that stretch reads NNSTPNKNTSTPPVNV.

This is an uncharacterized protein from Haemophilus influenzae (strain ATCC 51907 / DSM 11121 / KW20 / Rd).